Consider the following 727-residue polypeptide: Translation initiation factor IF-2, mitochondrial (727 aa).

Residues 1-29 constitute a mitochondrion transit peptide; sequence MNQKLLKLENLLRFHTICRQVHSPSQRRL. A tr-type G domain is found at 178–346; sequence PRSPVVTVMG…ATIALAEILE (169 aa). The segment at 187 to 194 is G1; it reads GHVDHGKT. 187–194 is a GTP binding site; that stretch reads GHVDHGKT. Positions 212–216 are G2; sequence GITQH. GTP-binding positions include 234–237 and 288–291; these read DTPG and NKCD. The segment at 234–237 is G3; that stretch reads DTPG. A G4 region spans residues 288–291; the sequence is NKCD. Residues 324–326 are G5; the sequence is SAL. The residue at position 688 (threonine 688) is a Phosphothreonine.

The protein belongs to the TRAFAC class translation factor GTPase superfamily. Classic translation factor GTPase family. IF-2 subfamily. As to quaternary structure, monomer.

It is found in the mitochondrion. One of the essential components for the initiation of protein synthesis. Protects formylmethionyl-tRNA from spontaneous hydrolysis and promotes its binding to the 30S ribosomal subunits. Also involved in the hydrolysis of GTP during the formation of the 70S ribosomal complex. The chain is Translation initiation factor IF-2, mitochondrial (Mtif2) from Mus musculus (Mouse).